Consider the following 179-residue polypeptide: MIP18 family protein C144.16 (179 aa).

Residues 1-26 form a disordered region; the sequence is MSANLQNENPEVKELNQLPSRVEEEE.

It belongs to the MIP18 family.

In terms of biological role, may play a role in chromosome segregation through establishment of sister chromatid cohesion. The polypeptide is MIP18 family protein C144.16 (Schizosaccharomyces pombe (strain 972 / ATCC 24843) (Fission yeast)).